A 257-amino-acid polypeptide reads, in one-letter code: MNCDTAQPWMMSSYHPSTTSDVFWTTTPSSTSTTPSSDNGIQQYSSISTSSGYAPANSPAKTAEVNQLGGVFVNGRPLPFEMRCKIVELSRQGTRPCDISRQLKISHGCVSKILTRFSENGTIMPGTIGGSRPRVTTPKVVEYIRSLKRSDPGIFAWEIRDRLISADICDRANLPSVSSISRILRNKNGGNSSSSSSSQLRYIRDQLAEQQQQQHLQQHQYMEYNNNELNQISGNLDYQVSSSNTPPSYDSYHFIAN.

A compositionally biased stretch (low complexity) spans Thr-26 to Ser-37. A disordered region spans residues Thr-26–Ser-58. Over residues Asp-38–Gly-52 the composition is skewed to polar residues. The segment at residues Lys-61–Lys-187 is a DNA-binding region (paired). Positions Glu-64–Asn-120 are PAI subdomain. Residues Lys-139–Lys-187 are RED subdomain.

It localises to the nucleus. Its function is as follows. Transcription factor. May play a role in pharyngeal cell differentiation. May have a protective role in response to infection by the Gram-negative bacterium Vibrio cholerae. The sequence is that of Paired box protein 1 homolog from Caenorhabditis elegans.